The following is a 329-amino-acid chain: Beta-ribofuranosylphenol 5'-phosphate synthase (329 aa).

Belongs to the beta-RFA-P synthase family. In terms of assembly, homodimer. Mg(2+) serves as cofactor.

The enzyme catalyses 5-phospho-alpha-D-ribose 1-diphosphate + 4-hydroxybenzoate + H(+) = 4-(beta-D-ribofuranosyl)phenol 5'-phosphate + CO2 + diphosphate. It catalyses the reaction 4-aminobenzoate + 5-phospho-alpha-D-ribose 1-diphosphate + H(+) = 4-(beta-D-ribofuranosyl)aminobenzene 5'-phosphate + CO2 + diphosphate. It participates in cofactor biosynthesis; 5,6,7,8-tetrahydromethanopterin biosynthesis. In terms of biological role, catalyzes the condensation of 4-hydroxybenzoate (HB) with 5-phospho-alpha-D-ribose 1-diphosphate (PRPP) to produce beta-ribofuranosylphenol 5'-phosphate (beta-RFH-P). Also catalyzes the condensation of 4-aminobenzoate (pABA) with PRPP to produce beta-ribofuranosylaminobenzene 5'-phosphate (beta-RFA-P). Only 4-hydroxybenzoate is known to be biosynthesized by methanogenic archaea, but 4-aminobenzoate can be used as substrate by growing methanogens when it is present in the growth medium. This Methanothermobacter thermautotrophicus (strain ATCC 29096 / DSM 1053 / JCM 10044 / NBRC 100330 / Delta H) (Methanobacterium thermoautotrophicum) protein is Beta-ribofuranosylphenol 5'-phosphate synthase.